A 142-amino-acid chain; its full sequence is Large ribosomal subunit protein uL13 (142 aa).

This sequence belongs to the universal ribosomal protein uL13 family. Part of the 50S ribosomal subunit.

Its function is as follows. This protein is one of the early assembly proteins of the 50S ribosomal subunit, although it is not seen to bind rRNA by itself. It is important during the early stages of 50S assembly. The protein is Large ribosomal subunit protein uL13 of Shewanella oneidensis (strain ATCC 700550 / JCM 31522 / CIP 106686 / LMG 19005 / NCIMB 14063 / MR-1).